Reading from the N-terminus, the 394-residue chain is Mitogen-activated protein kinase 2 (394 aa).

The span at Met1–Glu31 shows a compositional bias: gly residues. The tract at residues Met1–Gln33 is disordered. Residues Val61–Leu347 enclose the Protein kinase domain. ATP is bound by residues Val67–Ile75 and Lys90. Asp187 acts as the Proton acceptor in catalysis. Tyr221 is subject to Phosphotyrosine.

Belongs to the protein kinase superfamily. CMGC Ser/Thr protein kinase family. MAP kinase subfamily. The phosphorylation on Tyr-221 activates the enzyme. A conserved Thr, which must also be phosphorylated to activate the enzyme in closely related sequences, is replaced by Met-219 in this sequence.

The enzyme catalyses L-seryl-[protein] + ATP = O-phospho-L-seryl-[protein] + ADP + H(+). It catalyses the reaction L-threonyl-[protein] + ATP = O-phospho-L-threonyl-[protein] + ADP + H(+). The sequence is that of Mitogen-activated protein kinase 2 (MPK2) from Oryza sativa subsp. japonica (Rice).